A 368-amino-acid polypeptide reads, in one-letter code: Protein-glutamate methylesterase/protein-glutamine glutaminase (368 aa).

One can recognise a Response regulatory domain in the interval 9–126; it reads RVLVVDDSAF…SINMRELKDE (118 aa). At D60 the chain carries 4-aspartylphosphate. The CheB-type methylesterase domain maps to 161-354; the sequence is SVPARIAVAI…ETVVRAVEMI (194 aa). Active-site residues include S173, H200, and D296.

Belongs to the CheB family. Post-translationally, phosphorylated by CheA. Phosphorylation of the N-terminal regulatory domain activates the methylesterase activity.

The protein localises to the cytoplasm. The enzyme catalyses [protein]-L-glutamate 5-O-methyl ester + H2O = L-glutamyl-[protein] + methanol + H(+). It catalyses the reaction L-glutaminyl-[protein] + H2O = L-glutamyl-[protein] + NH4(+). In terms of biological role, involved in chemotaxis. Part of a chemotaxis signal transduction system that modulates chemotaxis in response to various stimuli. Catalyzes the demethylation of specific methylglutamate residues introduced into the chemoreceptors (methyl-accepting chemotaxis proteins or MCP) by CheR. Also mediates the irreversible deamidation of specific glutamine residues to glutamic acid. The chain is Protein-glutamate methylesterase/protein-glutamine glutaminase from Pyrococcus abyssi (strain GE5 / Orsay).